The sequence spans 340 residues: Beta-1,3-N-acetylglucosaminyltransferase radical fringe (340 aa).

Over 1–4 (MKIT) the chain is Cytoplasmic. The chain crosses the membrane as a helical; Signal-anchor for type II membrane protein span at residues 5–25 (YVGLIKVCFLVFLLLCATVLL). Residues 26-340 (NISWRQRDSS…AFSLAEDPTR (315 aa)) lie on the Lumenal side of the membrane. An N-linked (GlcNAc...) asparagine glycan is attached at N42. Position 110 (R110) interacts with substrate. N-linked (GlcNAc...) asparagine glycosylation occurs at N149. Intrachain disulfides connect C150–C161 and C179–C242. D183 is a binding site for substrate. D184 lines the Mn(2+) pocket. Residue D272 is part of the active site. Mn(2+) is bound at residue H296.

Belongs to the glycosyltransferase 31 family. Requires Mn(2+) as cofactor.

Its subcellular location is the golgi apparatus membrane. The enzyme catalyses 3-O-(alpha-L-fucosyl)-L-threonyl-[EGF-like domain protein] + UDP-N-acetyl-alpha-D-glucosamine = 3-O-(N-acetyl-beta-D-glucosaminyl-(1-&gt;3)-alpha-L-fucosyl)-L-threonyl-[EGF-like domain protein] + UDP + H(+). It catalyses the reaction 3-O-(alpha-L-fucosyl)-L-seryl-[EGF-like domain protein] + UDP-N-acetyl-alpha-D-glucosamine = 3-O-(N-acetyl-beta-D-glucosaminyl-(1-&gt;3)-alpha-L-fucosyl)-L-seryl-[EGF-like domain protein] + UDP + H(+). Its function is as follows. Glycosyltransferase that initiates the elongation of O-linked fucose residues attached to EGF-like repeats in the extracellular domain of Notch molecules. This chain is Beta-1,3-N-acetylglucosaminyltransferase radical fringe (rfng), found in Xenopus laevis (African clawed frog).